Reading from the N-terminus, the 141-residue chain is Large ribosomal subunit protein uL11 (141 aa).

Belongs to the universal ribosomal protein uL11 family. As to quaternary structure, part of the ribosomal stalk of the 50S ribosomal subunit. Interacts with L10 and the large rRNA to form the base of the stalk. L10 forms an elongated spine to which L12 dimers bind in a sequential fashion forming a multimeric L10(L12)X complex. Post-translationally, one or more lysine residues are methylated.

Functionally, forms part of the ribosomal stalk which helps the ribosome interact with GTP-bound translation factors. This chain is Large ribosomal subunit protein uL11, found in Latilactobacillus sakei subsp. sakei (strain 23K) (Lactobacillus sakei subsp. sakei).